The chain runs to 483 residues: Regulatory protein ViaA (483 aa).

It belongs to the ViaA family. In terms of assembly, homodimer. Interacts with RavA.

It localises to the cytoplasm. Functionally, component of the RavA-ViaA chaperone complex, which may act on the membrane to optimize the function of some of the respiratory chains. ViaA stimulates the ATPase activity of RavA. The protein is Regulatory protein ViaA of Salmonella heidelberg (strain SL476).